Reading from the N-terminus, the 156-residue chain is Small ribosomal subunit protein uS7 (156 aa).

It belongs to the universal ribosomal protein uS7 family. In terms of assembly, part of the 30S ribosomal subunit. Contacts proteins S9 and S11.

In terms of biological role, one of the primary rRNA binding proteins, it binds directly to 16S rRNA where it nucleates assembly of the head domain of the 30S subunit. Is located at the subunit interface close to the decoding center, probably blocks exit of the E-site tRNA. This is Small ribosomal subunit protein uS7 from Desulfosudis oleivorans (strain DSM 6200 / JCM 39069 / Hxd3) (Desulfococcus oleovorans).